The primary structure comprises 79 residues: Beta-defensin 130 (79 aa).

An N-terminal signal peptide occupies residues 1–22 (MKLHSLISVLLLFVTLIPKGKT). Disulfide bonds link C38/C53 and C43/C60.

This sequence belongs to the beta-defensin family.

Its subcellular location is the secreted. Functionally, antimicrobial host-defense peptide. The chain is Beta-defensin 130 from Pan troglodytes (Chimpanzee).